A 237-amino-acid polypeptide reads, in one-letter code: Platelet-aggregating proteinase PA-BJ (237 aa).

Positions 1–5 (NSLVI) are excised as a propeptide. The region spanning 6-229 (VVGGRPCKIN…YLPWIESIIA (224 aa)) is the Peptidase S1 domain. Intrachain disulfides connect C12–C144, C31–C47, C79–C236, C123–C191, C155–C170, and C181–C205. A glycan (N-linked (GlcNAc...) asparagine) is linked at N25. The O-linked (GalNAc...) serine glycan is linked to S28. Active-site charge relay system residues include H46 and D91. S185 acts as the Charge relay system in catalysis.

This sequence belongs to the peptidase S1 family. Snake venom subfamily. In terms of assembly, monomer. In terms of tissue distribution, expressed by the venom gland.

The protein localises to the secreted. Its activity is regulated as follows. Inhibited by PMSF. The amidolytic activity is also inhibited by benzamidine derivatives. Functionally, snake venom serine protease that induces platelet aggregation through activation of protease-activated platelet receptors (PAR1/F2R and PAR4/F2RL3). On F2R, the cleavage occurs at Arg41-Ser42 (like thrombin cleavage), and Arg46-Asn47. In normal condition of hemostasis, the cleavage of the Arg41-Ser42 bond liberates a new N-terminus that functions as an agonist. However after envenomation, the cleavage of Arg46-Asn47 bond degrades this potential agonist. This may explain why the snake protease is less potent than thrombin in causing platelet aggregation and release reaction. On F2RL3, a thrombin-like activity has also been proven by calcium release from lung fibroblasts transfected with this receptor. Possesses amidolytic activities. The sequence is that of Platelet-aggregating proteinase PA-BJ from Bothrops jararaca (Jararaca).